Consider the following 464-residue polypeptide: MEDEDGEDRALLGGRREADSAVHGAPRALSALCDPSRLAHRLVVLSLMCFLGFGSYFCYDNPAALQTQVKRDMQVNTTKFMLLYAWYSWPNVVLCFLGGFLIDRIFGIRWGTVIFSCFVCIGQVIFALGGIFNAFWLMELGRFVFGIGGESLAVAQNTYAVSWFKGKELNLVFGLQLSMARIGSTVNMNLMGWLYGKIEALLGSAGHMTLGVTLMIGCITCIFSLICALALAYLDRRAEKILHKEQGKTGEVIKLRDIKDFSLPLILVFVICVCYYVAVFPFIGLGKVFFMEKFRFSSQSASAINSIVYIISAPMSPLFGLLVDKTGKNIIWVLYAVAATLVSHMMLAFTFWNPWIAMCLLGFSYSLLACALWPMVAFIVPEHQLGTAYGFMQSIQNLGLAVIAILAGMILDSKGYLLLEVFFIACVSLSLLAVVCLYLVNRAQGGNLNYSAKQRERMKLSHPE.

The short motif at 11–12 is the Dileucine internalization motif element; the sequence is LL. Ser-20 is modified (phosphoserine). The next 12 membrane-spanning stretches (helical) occupy residues 38–58, 82–102, 112–132, 134–154, 190–210, 214–234, 265–285, 303–323, 330–350, 360–380, 391–411, and 417–437; these read LAHR…SYFC, LLYA…GFLI, TVIF…GGIF, AFWL…SLAV, LMGW…HMTL, LMIG…LAYL, LILV…FIGL, AINS…GLLV, IIWV…LAFT, LLGF…AFIV, FMQS…GMIL, and LLLE…VVCL.

The protein belongs to the major facilitator superfamily. In terms of assembly, homodimer. Interacts with lysosomal protein GLMP (via lumenal domain); the interaction starts while both proteins are still in the endoplasmic reticulum and is required for stabilization of MFSD1 in lysosomes but has no direct effect on its targeting to lysosomes or transporter activity. Not N-glycosylated. In brain, expressed in the cortex, striatum hippocampus, hypothalamus, thalamus and brainstem (at protein level). Widely expressed with highest levels in kidney and spleen (at protein level).

The protein resides in the lysosome membrane. It catalyses the reaction L-alpha-aminoacyl-L-arginine(out) = L-alpha-aminoacyl-L-arginine(in). It carries out the reaction L-arginyl-L-alpha-amino acid(out) = L-arginyl-L-alpha-amino acid(in). The enzyme catalyses L-arginyl-glycine(out) = L-arginyl-glycine(in). The catalysed reaction is L-alpha-aminoacyl-L-lysine(out) = L-alpha-aminoacyl-L-lysine(in). It catalyses the reaction L-aspartyl-L-lysine(out) = L-aspartyl-L-lysine(in). It carries out the reaction L-alanyl-L-lysine(out) = L-alanyl-L-lysine(in). The enzyme catalyses L-lysyl-L-alpha-amino acid(out) = L-lysyl-L-alpha-amino acid(in). The catalysed reaction is L-lysyl-L-alanine(out) = L-lysyl-L-alanine(in). It catalyses the reaction L-lysyl-L-lysine(out) = L-lysyl-L-lysine(in). It carries out the reaction L-lysyl-glycine(out) = L-lysyl-glycine(in). The enzyme catalyses L-alpha-aminoacyl-L-histidine(out) = L-alpha-aminoacyl-L-histidine(in). The catalysed reaction is L-histidyl-L-alpha-amino acid(out) = L-histidyl-L-alpha-amino acid(in). It catalyses the reaction L-histidyl-glycine(out) = L-histidyl-glycine(in). Lysosomal dipeptide uniporter that selectively exports lysine, arginine or histidine-containing dipeptides with a net positive charge from the lysosome lumen into the cytosol. Could play a role in a specific type of protein O-glycosylation indirectly regulating macrophages migration and tissue invasion. Also essential for liver homeostasis. The sequence is that of Lysosomal dipeptide transporter MFSD1 from Mus musculus (Mouse).